A 281-amino-acid polypeptide reads, in one-letter code: Probable endonuclease 4 (281 aa).

His-69, His-109, Glu-145, Asp-179, His-182, His-216, Asp-229, His-231, and Glu-261 together coordinate Zn(2+).

The protein belongs to the AP endonuclease 2 family. Zn(2+) is required as a cofactor.

It catalyses the reaction Endonucleolytic cleavage to 5'-phosphooligonucleotide end-products.. Its function is as follows. Endonuclease IV plays a role in DNA repair. It cleaves phosphodiester bonds at apurinic or apyrimidinic (AP) sites, generating a 3'-hydroxyl group and a 5'-terminal sugar phosphate. The chain is Probable endonuclease 4 from Pectobacterium carotovorum subsp. carotovorum (strain PC1).